Here is a 193-residue protein sequence, read N- to C-terminus: Thymidine kinase (193 aa).

ATP-binding positions include 15–22 (GCMYSGKT) and 87–90 (DELH). The active-site Proton acceptor is E88. Residues C147, C150, C185, and C188 each contribute to the Zn(2+) site.

The protein belongs to the thymidine kinase family. Homotetramer.

It localises to the cytoplasm. It carries out the reaction thymidine + ATP = dTMP + ADP + H(+). This chain is Thymidine kinase, found in Chloroflexus aurantiacus (strain ATCC 29366 / DSM 635 / J-10-fl).